A 142-amino-acid polypeptide reads, in one-letter code: Biogenesis of lysosome-related organelles complex 1 subunit 2 (142 aa).

The segment at 1 to 33 (MAAAAEGVLATRSDEPARDDAAVETAEEAKEPA) is disordered. At A2 the chain carries N-acetylalanine. The segment covering 12–33 (RSDEPARDDAAVETAEEAKEPA) has biased composition (basic and acidic residues). Residues 79 to 127 (EMKDIAINISRNLKDLNQKYAGLQPYLDQINVIEEQVAALEQAAYKLDA) are a coiled coil.

It belongs to the BLOC1S2 family. Component of the biogenesis of lysosome-related organelles complex 1 (BLOC-1) composed of BLOC1S1, BLOC1S2, BLOC1S3, BLOC1S4, BLOC1S5, BLOC1S6, DTNBP1/BLOC1S7 and SNAPIN/BLOC1S8. Octamer composed of one copy each BLOC1S1, BLOC1S2, BLOC1S3, BLOC1S4, BLOC1S5, BLOC1S6, DTNBP1/BLOC1S7 and SNAPIN/BLOC1S8. Interacts directly with BLOC1S1, BLOC1S3, BLOC1S4, BLOC1S5 and SNAPIN. The BLOC-1 complex associates with the AP-3 protein complex and membrane protein cargos. Component of the BLOC-one-related complex (BORC) which is composed of BLOC1S1, BLOC1S2, BORCS5, BORCS6, BORCS7, BORCS8, KXD1 and SNAPIN. Interacts with gamma-tubulin. Interacts with IFT57. Isoform 1 and isoform 2 are widely expressed. Expressed in various malignant tumor tissues (at protein level).

The protein resides in the cytoplasm. The protein localises to the cytoskeleton. It localises to the microtubule organizing center. It is found in the centrosome. Its subcellular location is the lysosome membrane. Functionally, component of the BLOC-1 complex, a complex that is required for normal biogenesis of lysosome-related organelles (LRO), such as platelet dense granules and melanosomes. In concert with the AP-3 complex, the BLOC-1 complex is required to target membrane protein cargos into vesicles assembled at cell bodies for delivery into neurites and nerve terminals. The BLOC-1 complex, in association with SNARE proteins, is also proposed to be involved in neurite extension. As part of the BORC complex may play a role in lysosomes movement and localization at the cell periphery. Associated with the cytosolic face of lysosomes, the BORC complex may recruit ARL8B and couple lysosomes to microtubule plus-end-directed kinesin motor. May play a role in cell proliferation. The protein is Biogenesis of lysosome-related organelles complex 1 subunit 2 (BLOC1S2) of Homo sapiens (Human).